Reading from the N-terminus, the 318-residue chain is MNQDTQSANTQQEKKIAYNFNKLQKRLRRNVGNAIADFNMIEDGDKVMVCLSGGKDSYTLLDILLNLKLSAPIHFDIVAVNLDQKQPGFPEHILPEYLESIGVEYKIVEENTYGIVKEKIPEGKTTCSLCSRLRRGILYRTATELGATKIALGHHRDDMLETLFLNMFYGGKLKSMPPKLISDDGKQIVIRPLAYCKEKDIEKYSQAKQFPIIPCNLCGSQPNLQRQVVKEMLQTWDRQYPGRIETMFSAMQNITLSHLCDPSLFDFKGLKLGQVLDGVEGDIAFDKAEIPNQPLIQDEDEQTTDYGENGMIQFKQVQ.

A PP-loop motif motif is present at residues 52–57; that stretch reads SGGKDS. Residues Cys-127, Cys-130, and Cys-218 each contribute to the [4Fe-4S] cluster site.

This sequence belongs to the TtcA family. Homodimer. The cofactor is Mg(2+). [4Fe-4S] cluster is required as a cofactor.

The protein resides in the cytoplasm. The enzyme catalyses cytidine(32) in tRNA + S-sulfanyl-L-cysteinyl-[cysteine desulfurase] + AH2 + ATP = 2-thiocytidine(32) in tRNA + L-cysteinyl-[cysteine desulfurase] + A + AMP + diphosphate + H(+). It participates in tRNA modification. In terms of biological role, catalyzes the ATP-dependent 2-thiolation of cytidine in position 32 of tRNA, to form 2-thiocytidine (s(2)C32). The sulfur atoms are provided by the cysteine/cysteine desulfurase (IscS) system. The polypeptide is tRNA-cytidine(32) 2-sulfurtransferase (Actinobacillus pleuropneumoniae serotype 3 (strain JL03)).